The sequence spans 227 residues: Cytochrome c oxidase subunit 2 (227 aa).

Residues 1 to 14 are Mitochondrial intermembrane-facing; sequence MAYPFQLGLQDATS. A helical membrane pass occupies residues 15 to 45; it reads PIMEELTNFHDHTLMIVFLISTLVLYIISLM. Topologically, residues 46–59 are mitochondrial matrix; it reads LTTKLTHTSTMDAQ. The helical transmembrane segment at 60 to 87 threads the bilayer; it reads EVETIWTILPAVILILIALPSLRILYMM. Over 88 to 227 the chain is Mitochondrial intermembrane; sequence DEINNPALTV…YFEDWSASMI (140 aa). The Cu cation site is built by His-161, Cys-196, Glu-198, Cys-200, His-204, and Met-207. Glu-198 is a binding site for Mg(2+). At Tyr-218 the chain carries Phosphotyrosine.

It belongs to the cytochrome c oxidase subunit 2 family. As to quaternary structure, component of the cytochrome c oxidase (complex IV, CIV), a multisubunit enzyme composed of 14 subunits. The complex is composed of a catalytic core of 3 subunits MT-CO1, MT-CO2 and MT-CO3, encoded in the mitochondrial DNA, and 11 supernumerary subunits COX4I, COX5A, COX5B, COX6A, COX6B, COX6C, COX7A, COX7B, COX7C, COX8 and NDUFA4, which are encoded in the nuclear genome. The complex exists as a monomer or a dimer and forms supercomplexes (SCs) in the inner mitochondrial membrane with NADH-ubiquinone oxidoreductase (complex I, CI) and ubiquinol-cytochrome c oxidoreductase (cytochrome b-c1 complex, complex III, CIII), resulting in different assemblies (supercomplex SCI(1)III(2)IV(1) and megacomplex MCI(2)III(2)IV(2)). Found in a complex with TMEM177, COA6, COX18, COX20, SCO1 and SCO2. Interacts with TMEM177 in a COX20-dependent manner. Interacts with COX20. Interacts with COX16. Cu cation is required as a cofactor.

Its subcellular location is the mitochondrion inner membrane. It carries out the reaction 4 Fe(II)-[cytochrome c] + O2 + 8 H(+)(in) = 4 Fe(III)-[cytochrome c] + 2 H2O + 4 H(+)(out). Functionally, component of the cytochrome c oxidase, the last enzyme in the mitochondrial electron transport chain which drives oxidative phosphorylation. The respiratory chain contains 3 multisubunit complexes succinate dehydrogenase (complex II, CII), ubiquinol-cytochrome c oxidoreductase (cytochrome b-c1 complex, complex III, CIII) and cytochrome c oxidase (complex IV, CIV), that cooperate to transfer electrons derived from NADH and succinate to molecular oxygen, creating an electrochemical gradient over the inner membrane that drives transmembrane transport and the ATP synthase. Cytochrome c oxidase is the component of the respiratory chain that catalyzes the reduction of oxygen to water. Electrons originating from reduced cytochrome c in the intermembrane space (IMS) are transferred via the dinuclear copper A center (CU(A)) of subunit 2 and heme A of subunit 1 to the active site in subunit 1, a binuclear center (BNC) formed by heme A3 and copper B (CU(B)). The BNC reduces molecular oxygen to 2 water molecules using 4 electrons from cytochrome c in the IMS and 4 protons from the mitochondrial matrix. The protein is Cytochrome c oxidase subunit 2 (MT-CO2) of Hybomys univittatus (Peter's striped mouse).